Consider the following 385-residue polypeptide: UPF0284 protein P9301_04631 (385 aa).

It belongs to the UPF0284 family.

The sequence is that of UPF0284 protein P9301_04631 from Prochlorococcus marinus (strain MIT 9301).